The primary structure comprises 933 residues: Bifunctional uridylyltransferase/uridylyl-removing enzyme (933 aa).

The uridylyltransferase stretch occupies residues 1–390 (MLSTRAASAD…RLAALARRKD (390 aa)). The tract at residues 391-745 (VDGFVVDGER…TRIDRGRAIT (355 aa)) is uridylyl-removing. In terms of domain architecture, HD spans 506-628 (VDEHTLFALG…VQSPERLRLL (123 aa)). ACT domains lie at 746–829 (EVTI…DLTK) and 859–933 (VIEV…DPSA).

It belongs to the GlnD family. Mg(2+) serves as cofactor.

It carries out the reaction [protein-PII]-L-tyrosine + UTP = [protein-PII]-uridylyl-L-tyrosine + diphosphate. The enzyme catalyses [protein-PII]-uridylyl-L-tyrosine + H2O = [protein-PII]-L-tyrosine + UMP + H(+). Uridylyltransferase (UTase) activity is inhibited by glutamine, while glutamine activates uridylyl-removing (UR) activity. Uridylylation process is dependent on ATP and 2-oxoglutarate, which are effector molecules that likely bind to PII proteins and control their activity. Its function is as follows. Modifies, by uridylylation and deuridylylation, the PII regulatory proteins GlnB and GlnZ, in response to the nitrogen status of the cell that GlnD senses through the glutamine level. Under low glutamine levels, catalyzes the conversion of the PII proteins and UTP to PII-UMP and PPi, while under higher glutamine levels, GlnD hydrolyzes PII-UMP to PII and UMP (deuridylylation). Thus, controls uridylylation state and activity of the PII proteins, and plays an important role in the regulation of nitrogen fixation and metabolism. The chain is Bifunctional uridylyltransferase/uridylyl-removing enzyme from Azospirillum brasilense.